A 199-amino-acid polypeptide reads, in one-letter code: CASP-like protein 4C1 (199 aa).

Residues 1 to 35 (MESGSVANDSGPLNSTPDVHLYGKTAAMKQRRSNT) lie on the Cytoplasmic side of the membrane. Residues 36-56 (MLFVFRLLTFSFSLAAVLVMG) traverse the membrane as a helical segment. The Extracellular segment spans residues 57–80 (TNKQKIRSAPQYLEVAWHDFDPFR). The helical transmembrane segment at 81 to 101 (YVFAVNAIICVYSFVETWLAV) threads the bilayer. The Cytoplasmic portion of the chain corresponds to 102–124 (YTLSRGTLLLPETFQVWFDYGHD). A helical membrane pass occupies residues 125–145 (QGFACLLFSANSVGIAMAQLL). The Extracellular portion of the chain corresponds to 146-169 (QSGSTLIQGQYYCSDAGAYCTQAR). Residues 170–190 (VSIAMGFGAFLFLALSSFLTG) form a helical membrane-spanning segment. Topologically, residues 191-199 (LRVARWYLP) are cytoplasmic.

This sequence belongs to the Casparian strip membrane proteins (CASP) family. In terms of assembly, homodimer and heterodimers.

Its subcellular location is the cell membrane. The protein is CASP-like protein 4C1 of Physcomitrium patens (Spreading-leaved earth moss).